Here is a 353-residue protein sequence, read N- to C-terminus: Uroporphyrinogen decarboxylase (353 aa).

Substrate contacts are provided by residues 33 to 37 (RQAGR), Asp82, Tyr158, Ser213, and His332.

Belongs to the uroporphyrinogen decarboxylase family. As to quaternary structure, homodimer.

It is found in the cytoplasm. The enzyme catalyses uroporphyrinogen III + 4 H(+) = coproporphyrinogen III + 4 CO2. The protein operates within porphyrin-containing compound metabolism; protoporphyrin-IX biosynthesis; coproporphyrinogen-III from 5-aminolevulinate: step 4/4. Its function is as follows. Catalyzes the decarboxylation of four acetate groups of uroporphyrinogen-III to yield coproporphyrinogen-III. This is Uroporphyrinogen decarboxylase from Gluconobacter oxydans (strain 621H) (Gluconobacter suboxydans).